The primary structure comprises 39 residues: Conotoxin Cl14.5 (39 aa).

Positions 1-16 (PVNEAGVERLFRALVG) are excised as a propeptide. Residue proline 38 is modified to Proline amide.

Contains 2 disulfide bonds. As to expression, expressed by the venom duct.

It is found in the secreted. This Californiconus californicus (California cone) protein is Conotoxin Cl14.5.